The sequence spans 204 residues: Holliday junction branch migration complex subunit RuvA (204 aa).

The interval 1–64 (MIGRLRGILL…EDAQLLYGFN (64 aa)) is domain I. The segment at 65–143 (TVKERALFRE…GWSAGDLFTP (79 aa)) is domain II. Positions 144–155 (FTDAAPVDSGST) are flexible linker. The tract at residues 156–204 (SSNSAEEEAVSALLALGYKPVQASKVVSQIAKPDMTSEQLIREALKSMV) is domain III.

This sequence belongs to the RuvA family. Homotetramer. Forms an RuvA(8)-RuvB(12)-Holliday junction (HJ) complex. HJ DNA is sandwiched between 2 RuvA tetramers; dsDNA enters through RuvA and exits via RuvB. An RuvB hexamer assembles on each DNA strand where it exits the tetramer. Each RuvB hexamer is contacted by two RuvA subunits (via domain III) on 2 adjacent RuvB subunits; this complex drives branch migration. In the full resolvosome a probable DNA-RuvA(4)-RuvB(12)-RuvC(2) complex forms which resolves the HJ.

The protein resides in the cytoplasm. In terms of biological role, the RuvA-RuvB-RuvC complex processes Holliday junction (HJ) DNA during genetic recombination and DNA repair, while the RuvA-RuvB complex plays an important role in the rescue of blocked DNA replication forks via replication fork reversal (RFR). RuvA specifically binds to HJ cruciform DNA, conferring on it an open structure. The RuvB hexamer acts as an ATP-dependent pump, pulling dsDNA into and through the RuvAB complex. HJ branch migration allows RuvC to scan DNA until it finds its consensus sequence, where it cleaves and resolves the cruciform DNA. The polypeptide is Holliday junction branch migration complex subunit RuvA (Vibrio vulnificus (strain CMCP6)).